The sequence spans 359 residues: 3-dehydroquinate synthase (359 aa).

Residues 71 to 76 (DGEAYK), 105 to 109 (GVVGD), 129 to 130 (TT), lysine 142, and lysine 151 contribute to the NAD(+) site. 3 residues coordinate Zn(2+): glutamate 184, histidine 247, and histidine 264.

Belongs to the sugar phosphate cyclases superfamily. Dehydroquinate synthase family. Requires Co(2+) as cofactor. It depends on Zn(2+) as a cofactor. NAD(+) serves as cofactor.

The protein resides in the cytoplasm. The enzyme catalyses 7-phospho-2-dehydro-3-deoxy-D-arabino-heptonate = 3-dehydroquinate + phosphate. The protein operates within metabolic intermediate biosynthesis; chorismate biosynthesis; chorismate from D-erythrose 4-phosphate and phosphoenolpyruvate: step 2/7. Its function is as follows. Catalyzes the conversion of 3-deoxy-D-arabino-heptulosonate 7-phosphate (DAHP) to dehydroquinate (DHQ). This is 3-dehydroquinate synthase from Burkholderia lata (strain ATCC 17760 / DSM 23089 / LMG 22485 / NCIMB 9086 / R18194 / 383).